The primary structure comprises 230 residues: Complex I assembly factor TMEM126B, mitochondrial (230 aa).

Position 34 is a phosphoserine (Ser34). A run of 4 helical transmembrane segments spans residues 72–92, 110–130, 141–161, and 199–219; these read IYQMATFGTTAGFSGIFSNFL, LATLPFLSTVVTDKLFVIDAL, VFRSSLIGIVCGVFYPSSLAF, and IPLVFQIMFGILNGLYHYAVF.

It belongs to the TMEM126 family. As to quaternary structure, part of the mitochondrial complex I assembly/MCIA complex that comprises at least the core subunits TMEM126B, NDUFAF1, ECSIT and ACAD9 and complement subunits such as COA1 and TMEM186. Associates with the intermediate 370 kDa subcomplex of incompletely assembled complex I. Interacts with TMEM70.

Its subcellular location is the mitochondrion membrane. Its function is as follows. As part of the MCIA complex, involved in the assembly of the mitochondrial complex I. Participates in constructing the membrane arm of complex I. This is Complex I assembly factor TMEM126B, mitochondrial from Homo sapiens (Human).